We begin with the raw amino-acid sequence, 209 residues long: Holliday junction branch migration complex subunit RuvA (209 aa).

Residues 1–64 (MIGRIRGMLI…EDAQSLYGFA (64 aa)) form a domain I region. Residues 65–143 (SRLDRNLFRL…QLEGQFVPSQ (79 aa)) form a domain II region. The segment at 144-157 (PDVPTGAGAATASQ) is flexible linker. The segment at 158 to 209 (AGPDPREEAEAALIALGYKPQEAAKAISKVAGPDMNSETLIRLALKNMIPAG) is domain III.

The protein belongs to the RuvA family. As to quaternary structure, homotetramer. Forms an RuvA(8)-RuvB(12)-Holliday junction (HJ) complex. HJ DNA is sandwiched between 2 RuvA tetramers; dsDNA enters through RuvA and exits via RuvB. An RuvB hexamer assembles on each DNA strand where it exits the tetramer. Each RuvB hexamer is contacted by two RuvA subunits (via domain III) on 2 adjacent RuvB subunits; this complex drives branch migration. In the full resolvosome a probable DNA-RuvA(4)-RuvB(12)-RuvC(2) complex forms which resolves the HJ.

The protein resides in the cytoplasm. Functionally, the RuvA-RuvB-RuvC complex processes Holliday junction (HJ) DNA during genetic recombination and DNA repair, while the RuvA-RuvB complex plays an important role in the rescue of blocked DNA replication forks via replication fork reversal (RFR). RuvA specifically binds to HJ cruciform DNA, conferring on it an open structure. The RuvB hexamer acts as an ATP-dependent pump, pulling dsDNA into and through the RuvAB complex. HJ branch migration allows RuvC to scan DNA until it finds its consensus sequence, where it cleaves and resolves the cruciform DNA. In Marinobacter nauticus (strain ATCC 700491 / DSM 11845 / VT8) (Marinobacter aquaeolei), this protein is Holliday junction branch migration complex subunit RuvA.